A 243-amino-acid polypeptide reads, in one-letter code: Protein IN2-1 (243 aa).

Residues 1-26 (MAAAAGPSSSVKESLPPALGSTSQPP) are disordered. Positions 31–112 (GTTRLYICYF…YIDSNFDGPA (82 aa)) constitute a GST N-terminal domain. Residues Lys-70, Val-84, and 96-97 (ES) each bind glutathione. The region spanning 109–240 (DGPALLPEDA…FLLDLAKSHL (132 aa)) is the GST C-terminal domain.

It belongs to the GST superfamily. HSP26 family. Leaves and roots. It is more strongly induced in the leaves relative to the roots.

This Zea mays (Maize) protein is Protein IN2-1 (IN2-1).